Reading from the N-terminus, the 238-residue chain is Cysteine-rich venom protein natrin-2 (238 aa).

A signal peptide spans 1 to 19 (MIAFIVLLSLAAVLQQSSG). One can recognise an SCP domain in the interval 38–164 (VDKHNALRRS…SSKYLYVCQY (127 aa)). Cystine bridges form between C75–C153, C92–C165, C148–C162, C184–C191, C187–C196, C200–C233, C209–C227, and C218–C231. Residues 200–233 (CKHHNVFSNCQSLAKQNACQTEWMKSKCAASCFC) enclose the ShKT domain.

As to expression, expressed by the venom gland.

The protein resides in the secreted. Functionally, inhibits carbachol-induced muscle contraction and weakly blocks muscle contraction evoked by potassium. This chain is Cysteine-rich venom protein natrin-2, found in Naja atra (Chinese cobra).